Consider the following 262-residue polypeptide: Versicolorin reductase 1 (262 aa).

I21, D67, N94, and R127 together coordinate NADP(+). Residues S143 and S144 each act as proton donor in the active site. NADP(+) contacts are provided by Y158, K162, I191, and T193. Y158 functions as the Proton acceptor in the catalytic mechanism. The active-site Lowers pKa of active site Tyr is the K162.

This sequence belongs to the short-chain dehydrogenases/reductases (SDR) family.

The protein localises to the cytoplasm. The protein resides in the cytosol. It catalyses the reaction (4S,8R)-2,13,16,20-tetrahydroxy-7,9-dioxapentacyclo[10.8.0.0(3,10).0(4,8).0(14,19)]icosa-1(12),2,5,10,13,16,19-heptaen-18-one + NADPH + H(+) = (4S,8R,16R)-2,13,16,20-tetrahydroxy-7,9-dioxapentacyclo[10.8.0.0(3,10).0(4,8).0(14,19)]icosa-1(12),2,5,10,13,19-hexaen-18-one + NADP(+). It functions in the pathway mycotoxin biosynthesis; aflatoxin biosynthesis. Functionally, cytochrome P450 monooxygenase; part of the gene cluster that mediates the biosynthesis of aflatoxins, a group of polyketide-derived furanocoumarins, and part of the most toxic and carcinogenic compounds among the known mycotoxins. The four major aflatoxins produced by A.parasiticus are aflatoxin B1 (AFB1), aflatoxin B2 (AFB2), aflatoxin G1 (AFG1) and aflatoxin G2 (AFG2). Within the aflatoxin pathway, with the cytochrome P450 monooxygenase aflN, the versicolorin reductase aflM, is involved in conversion of VERA to demethylsterigmatocystin (DMST). The biosynthesis of aflatoxins begins with the norsolorinic acid synthase aflC that combines a hexanoyl starter unit produced by the fatty acid synthase aflA/aflB and 7 malonyl-CoA extender units to synthesize the precursor NOR. The second step is the conversion of NOR to averantin and requires the norsolorinic acid ketoreductase aflD, which catalyzes the dehydration of norsolorinic acid to form (1'S)-averantin. The norsolorinic acid reductases aflE and aflF may also play a role in the conversion of NOR to AVN. The cytochrome P450 monooxygenase aflG then catalyzes the hydroxylation of AVN to 5'hydroxyaverantin (HAVN). The next step is performed by the 5'-hydroxyaverantin dehydrogenase aflH that transforms HAVN to 5'-oxoaverantin (OAVN) which is further converted to averufin (AVF) by aflK that plays a dual role in the pathway, as a 5'-oxoaverantin cyclase that mediates conversion of 5'-oxoaverantin, as well as a versicolorin B synthase in a later step in the pathway. The averufin oxidase aflI catalyzes the conversion of AVF to versiconal hemiacetal acetate (VHA). VHA is then the substrate for the versiconal hemiacetal acetate esterase aflJ to yield versiconal (VAL). Versicolorin B synthase aflK then converts VAL to versicolorin B (VERB) by closing the bisfuran ring of aflatoxin which is required for DNA-binding, thus giving to aflatoxin its activity as a mutagen. Then, the activity of the versicolorin B desaturase aflL leads to versicolorin A (VERA). A branch point starts from VERB since it can also be converted to dihydrodemethylsterigmatocystin (DMDHST), probably also by aflL, VERA being a precursor for aflatoxins B1 and G1, and DMDHST for aflatoxins B2 and G2. Next, the versicolorin reductase aflM and the cytochrome P450 monooxygenase aflN are involved in conversion of VERA to demethylsterigmatocystin (DMST). AflX and aflY seem also involved in this step, through probable aflX-mediated epoxide ring-opening step following versicolorin A oxidation and aflY-mediated Baeyer-Villiger oxidation required for the formation of the xanthone ring. The methyltransferase aflO then leads to the modification of DMST to sterigmatocystin (ST), and of DMDHST to dihydrosterigmatocystin (DHST). Both ST and DHST are then substrates of the O-methyltransferase aflP to yield O-methylsterigmatocystin (OMST) and dihydro-O-methylsterigmatocystin (DHOMST), respectively. Finally OMST is converted to aflatoxins B1 and G1, and DHOMST to aflatoxins B2 and G2, via the action of several enzymes including O-methylsterigmatocystin oxidoreductase aflQ, the cytochrome P450 monooxygenase aflU, but also the NADH-dependent flavin oxidoreductase nadA which is specifically required for the synthesis of AFG1. The protein is Versicolorin reductase 1 of Aspergillus parasiticus (strain ATCC 56775 / NRRL 5862 / SRRC 143 / SU-1).